A 1480-amino-acid polypeptide reads, in one-letter code: Cystic fibrosis transmembrane conductance regulator (1480 aa).

The Cytoplasmic segment spans residues 1–77 (MQRSPLEKAS…KLINALRRCF (77 aa)). A helical membrane pass occupies residues 78–98 (FWRFMFYGIFLYLGEVTKAVQ). The ABC transmembrane type-1 1 domain occupies 81–365 (FMFYGIFLYL…WAVQTWYDSL (285 aa)). Over 99 to 122 (PLLLGRIIASYDPDNKEERSIAIY) the chain is Extracellular. The chain crosses the membrane as a helical span at residues 123-146 (LGIGLCLLFIVRTLLLHPAIFGLH). The Cytoplasmic segment spans residues 147-195 (HIGMQMRIAMFSLIYKKTLKLSSRVLDKISIGQLVSLLSNNLNKFDEGL). Residues 196 to 216 (ALAHFVWIAPLQVALLMGLIW) traverse the membrane as a helical segment. Residues 217–222 (ELLQAS) lie on the Extracellular side of the membrane. A helical transmembrane segment spans residues 223-243 (AFCGLGFLIVLALFQAGLGRM). Residues 244-298 (MMKYRDQRAGKISERLVITSEMIENIQSVKAYCWEEAMEKMIENLRQTELKLTRK) lie on the Cytoplasmic side of the membrane. A helical transmembrane segment spans residues 299–319 (AAYVRYFNSSAFFFSGFFVVF). Topologically, residues 320–339 (LSVLPYALIKGIILRKIFTT) are extracellular. A helical transmembrane segment spans residues 340 to 358 (ISFCIVLRMAVTRQFPWAV). Over 359 to 858 (QTWYDSLGAI…YLRYITVHKS (500 aa)) the chain is Cytoplasmic. ATP is bound by residues W401, S434, 458 to 465 (GSTGAGKT), and Q493. Residues 423–646 (NGDDSLFFSN…QPDFSSKLMG (224 aa)) form the ABC transporter 1 domain. C524 carries S-palmitoyl cysteine lipidation. S549 carries the phosphoserine modification. Residues 654-831 (SAERRNSILT…EEINEEDLKE (178 aa)) are disordered R region. Phosphoserine; by PKA is present on residues S660 and S670. S686 carries the post-translational modification Phosphoserine; by PKC. Residue K688 forms a Glycyl lysine isopeptide (Lys-Gly) (interchain with G-Cter in ubiquitin) linkage. A phosphoserine; by PKA mark is found at S700 and S712. T717 bears the Phosphothreonine mark. 3 positions are modified to phosphoserine; by PKA: S737, S753, and S768. A Phosphoserine; by PKC modification is found at S790. S795 and S813 each carry phosphoserine; by PKA. The chain crosses the membrane as a helical span at residues 859 to 879 (LIFVLIWCLVIFLAEVAASLV). The ABC transmembrane type-1 2 domain occupies 859–1155 (LIFVLIWCLV…AVNSSIDVDS (297 aa)). The Extracellular segment spans residues 880-918 (VLWLLGNTPLQDKGNSTHSRNNSYAVIITSTSSYYVFYI). Residues N894 and N900 are each glycosylated (N-linked (GlcNAc...) asparagine). Residues 919–939 (YVGVADTLLAMGFFRGLPLVH) traverse the membrane as a discontinuously helical segment. At 940-990 (TLITVSKILHHKMLHSVLQAPMSTLNTLKAGGILNRFSKDIAILDDLLPLT) the chain is on the cytoplasmic side. Residues 991–1011 (IFDFIQLLLIVIGAIAVVAVL) form a helical membrane-spanning segment. Residues 1012–1013 (QP) lie on the Extracellular side of the membrane. A helical membrane pass occupies residues 1014 to 1034 (YIFVATVPVIVAFIMLRAYFL). The Cytoplasmic segment spans residues 1035 to 1095 (QTSQQLKQLE…TANWFLYLST (61 aa)). The helical transmembrane segment at 1096–1116 (LRWFQMRIEMIFVIFFIAVTF) threads the bilayer. The Extracellular portion of the chain corresponds to 1117–1130 (ISILTTGEGEGRVG). A helical membrane pass occupies residues 1131–1151 (IILTLAMNIMSTLQWAVNSSI). Topologically, residues 1152–1480 (DVDSLMRSVS…TEEEVQDTRL (329 aa)) are cytoplasmic. Positions 1210–1443 (MTVKDLTAKY…RSLFRQAISP (234 aa)) constitute an ABC transporter 2 domain. Residues Y1219 and 1244–1251 (GRTGSGKS) each bind ATP. The interaction with GORASP2 stretch occupies residues 1386 to 1480 (RTLKQAFADC…TEEEVQDTRL (95 aa)). C1395 carries the S-palmitoyl cysteine lipid modification. A phosphoserine mark is found at S1444 and S1456. The interval 1452-1480 (HRNSSKCKSKPQIAALKEETEEEVQDTRL) is disordered. The span at 1470–1480 (ETEEEVQDTRL) shows a compositional bias: acidic residues. A PDZ-binding motif is present at residues 1478 to 1480 (TRL).

It belongs to the ABC transporter superfamily. ABCC family. CFTR transporter (TC 3.A.1.202) subfamily. In terms of assembly, monomer; does not require oligomerization for channel activity. May form oligomers in the membrane. Interacts with SLC26A3, SLC26A6 and SHANK2. Interacts with NHERF1 and MYO6. Interacts (via C-terminus) with GOPC (via PDZ domain); this promotes CFTR internalization and thereby decreases channel activity. Interacts with SLC4A7 through NHERF1. Found in a complex with MYO5B and RAB11A. Interacts with ANO1. Interacts with SLC26A8. Interacts with AHCYL1; the interaction increases CFTR activity. Interacts with CSE1L. The core-glycosylated form interacts with GORASP2 (via PDZ GRASP-type 1 domain) in respone to ER stress. Interacts with MARCHF2; the interaction leads to CFTR ubiqtuitination and degradation. Interacts with ADGRG2. In terms of processing, N-glycosylated. Post-translationally, phosphorylated; cAMP treatment promotes phosphorylation and activates the channel. Dephosphorylation decreases the ATPase activity (in vitro). Phosphorylation at PKA sites activates the channel. Phosphorylation at PKC sites enhances the response to phosphorylation by PKA. Phosphorylated by AMPK; this inhibits channel activity. Ubiquitinated, leading to its degradation in the lysosome. Deubiquitination by USP10 in early endosomes enhances its endocytic recycling to the cell membrane. Ubiquitinated by RNF185 during ER stress. Ubiquitinated by MARCHF2. Expressed in the respiratory airway, including bronchial epithelium, and in the female reproductive tract, including oviduct (at protein level). Detected in pancreatic intercalated ducts in the exocrine tissue, on epithelial cells in intralobular striated ducts in sublingual salivary glands, on apical membranes of crypt cells throughout the small and large intestine, and on the reabsorptive duct in eccrine sweat glands. Detected on the equatorial segment of the sperm head (at protein level). Detected in nasal and bronchial superficial epithelium. Expressed by the central cells on the sebaceous glands, dermal adipocytes and, at lower levels, by epithelial cells.

Its subcellular location is the apical cell membrane. It localises to the early endosome membrane. It is found in the cell membrane. The protein resides in the recycling endosome membrane. The protein localises to the endoplasmic reticulum membrane. Its subcellular location is the nucleus. The catalysed reaction is ATP + H2O + closed Cl(-) channel = ADP + phosphate + open Cl(-) channel.. The enzyme catalyses chloride(in) = chloride(out). It carries out the reaction hydrogencarbonate(in) = hydrogencarbonate(out). It catalyses the reaction ATP + H2O = ADP + phosphate + H(+). Epithelial ion channel that plays an important role in the regulation of epithelial ion and water transport and fluid homeostasis. Mediates the transport of chloride ions across the cell membrane. Possesses an intrinsic ATPase activity and utilizes ATP to gate its channel; the passive flow of anions through the channel is gated by cycles of ATP binding and hydrolysis by the ATP-binding domains. The ion channel is also permeable to HCO(3)(-); selectivity depends on the extracellular chloride concentration. In vitro, mediates ATP-dependent glutathione flux. Exerts its function also by modulating the activity of other ion channels and transporters. Plays an important role in airway fluid homeostasis. Contributes to the regulation of the pH and the ion content of the airway surface fluid layer and thereby plays an important role in defense against pathogens. Modulates the activity of the epithelial sodium channel (ENaC) complex, in part by regulating the cell surface expression of the ENaC complex. Inhibits the activity of the ENaC channel containing subunits SCNN1A, SCNN1B and SCNN1G. Inhibits the activity of the ENaC channel containing subunits SCNN1D, SCNN1B and SCNN1G, but not of the ENaC channel containing subunits SCNN1A, SCNN1B and SCNN1G. May regulate bicarbonate secretion and salvage in epithelial cells by regulating the transporter SLC4A7. Can inhibit the chloride channel activity of ANO1. Plays a role in the chloride and bicarbonate homeostasis during sperm epididymal maturation and capacitation. In Homo sapiens (Human), this protein is Cystic fibrosis transmembrane conductance regulator.